Consider the following 603-residue polypeptide: Phosphogluconate dehydratase (603 aa).

2 residues coordinate [4Fe-4S] cluster: cysteine 154 and cysteine 221.

The protein belongs to the IlvD/Edd family. It depends on [4Fe-4S] cluster as a cofactor.

It catalyses the reaction 6-phospho-D-gluconate = 2-dehydro-3-deoxy-6-phospho-D-gluconate + H2O. Its pathway is carbohydrate metabolism; Entner-Doudoroff pathway. Catalyzes the dehydration of 6-phospho-D-gluconate to 2-dehydro-3-deoxy-6-phospho-D-gluconate. The polypeptide is Phosphogluconate dehydratase (Escherichia coli O157:H7).